The following is a 328-amino-acid chain: Cytochrome c biogenesis protein CcsA (328 aa).

The next 8 membrane-spanning stretches (helical) occupy residues 15–35, 36–56, 68–88, 97–117, 142–162, 236–256, 263–283, and 297–317; these read FLVLFLTMLVYWAGAAFPSIP, LLPGLGSTGVAIANLCIAALL, ISNLYESLFFLAWGVTAVHLI, LVGVVTTPVAMGITAFATLSL, VMMLSYAALMVGSLMAIAFLI, VIGLGFPLLTIGIIAGAVWAN, WSWDPKETWALITWLVFAAYL, and AILAASGFVVVWVCYLGVNLL.

This sequence belongs to the CcmF/CycK/Ccl1/NrfE/CcsA family. In terms of assembly, may interact with ccs1.

The protein resides in the cellular thylakoid membrane. Functionally, required during biogenesis of c-type cytochromes (cytochrome c6 and cytochrome f) at the step of heme attachment. This is Cytochrome c biogenesis protein CcsA from Microcystis aeruginosa (strain NIES-843 / IAM M-2473).